The sequence spans 111 residues: UPF0122 protein CKR_1296 (111 aa).

Belongs to the UPF0122 family.

In terms of biological role, might take part in the signal recognition particle (SRP) pathway. This is inferred from the conservation of its genetic proximity to ftsY/ffh. May be a regulatory protein. This Clostridium kluyveri (strain NBRC 12016) protein is UPF0122 protein CKR_1296.